A 360-amino-acid polypeptide reads, in one-letter code: Xanthohumol 4-O-methyltransferase (360 aa).

Asp-227 contributes to the S-adenosyl-L-methionine binding site. The active-site Proton acceptor is His-266.

The protein belongs to the class I-like SAM-binding methyltransferase superfamily. Cation-independent O-methyltransferase family. In terms of assembly, homodimer. As to expression, highly expressed in lupulin glands. Detected in cones, male flowers and roots.

The protein resides in the cytoplasm. It catalyses the reaction xanthohumol + S-adenosyl-L-methionine = 4-O-methylxanthohumol + S-adenosyl-L-homocysteine + H(+). The enzyme catalyses desmethylxanthohumol + S-adenosyl-L-methionine = xanthohumol + S-adenosyl-L-homocysteine + H(+). The catalysed reaction is isoliquiritigenin + S-adenosyl-L-methionine = 2'-O-methylisoliquiritigenin + S-adenosyl-L-homocysteine + H(+). It carries out the reaction trans-resveratrol + S-adenosyl-L-methionine = 3-methoxy-4',5-dihydroxy-trans-stilbene + S-adenosyl-L-homocysteine + H(+). The protein operates within secondary metabolite biosynthesis. Inhibited by S-adenosyl homocysteine. Functionally, involved in the biosynthesis of prenylated phenolics natural products which contribute to the bitter taste of beer and display broad biological activities. O-methyltransferase with a low substrate selectivity. Methylates chalconaringenin, desmethylxanthohumol, xanthohumol, isoliquiritigenin, butein, 2',4-dihydroxychalcone, resveratrol, genistein and guaiacol. Catalyzes the biosynthesis of 2',4'-dihydroxy-4,6'-dimethoxy-3'-prenylchalcone (4-O-methylxanthohumol). This Humulus lupulus (European hop) protein is Xanthohumol 4-O-methyltransferase.